A 63-amino-acid chain; its full sequence is Large ribosomal subunit protein uL30 (63 aa).

The protein belongs to the universal ribosomal protein uL30 family. Part of the 50S ribosomal subunit.

This Stenotrophomonas maltophilia (strain K279a) protein is Large ribosomal subunit protein uL30.